Here is a 206-residue protein sequence, read N- to C-terminus: Endoplasmic reticulum transmembrane protein 1 (206 aa).

The Lumenal segment spans residues 1 to 7; it reads MSLYFTT. Residues 8-28 form a helical membrane-spanning segment; that stretch reads LFLLLTVEMVMLFIFVLPLPF. The Cytoplasmic segment spans residues 29 to 45; it reads RIRRGIFSTYNQLTAKQ. Residues 46 to 66 traverse the membrane as a helical segment; that stretch reads QIKTIIFITGCLVGLLFIDSW. Residues 67 to 104 lie on the Lumenal side of the membrane; the sequence is KRSQIRVSLYHNDNSGSIGSSAVTPIQALASRAYNQRN. A helical transmembrane segment spans residues 105–125; the sequence is MYISGFILYFSICIPTVMSIV. The Cytoplasmic portion of the chain corresponds to 126–206; the sequence is KRLVKYQGLI…AAAEASKKGN (81 aa). The interval 140–163 is disordered; the sequence is KQKLNKPSSNSKKDSNEADSTKLQ. Positions 150 to 163 are enriched in basic and acidic residues; sequence SKKDSNEADSTKLQ. Residue Lys-190 forms a Glycyl lysine isopeptide (Lys-Gly) (interchain with G-Cter in ubiquitin) linkage. The Di-lysine motif signature appears at 203 to 206; it reads KKGN.

This sequence belongs to the BCAP29/BCAP31 family.

The protein resides in the endoplasmic reticulum membrane. In terms of biological role, may play a role in anterograde transport of membrane proteins from the endoplasmic reticulum to the Golgi. This chain is Endoplasmic reticulum transmembrane protein 1 (YET1), found in Saccharomyces cerevisiae (strain ATCC 204508 / S288c) (Baker's yeast).